The sequence spans 189 residues: GTP cyclohydrolase 1 (189 aa).

Residues cysteine 78, histidine 81, and cysteine 150 each coordinate Zn(2+).

It belongs to the GTP cyclohydrolase I family. As to quaternary structure, homomer.

The catalysed reaction is GTP + H2O = 7,8-dihydroneopterin 3'-triphosphate + formate + H(+). The protein operates within cofactor biosynthesis; 7,8-dihydroneopterin triphosphate biosynthesis; 7,8-dihydroneopterin triphosphate from GTP: step 1/1. The sequence is that of GTP cyclohydrolase 1 from Lysinibacillus sphaericus (strain C3-41).